The primary structure comprises 621 residues: 5-aminolevulinate synthase, mitochondrial (621 aa).

The segment at 76–95 (DAKGSLAGRPVHHKAATEST) is disordered. 2 residues coordinate substrate: arginine 122 and serine 234. Pyridoxal 5'-phosphate contacts are provided by serine 286, histidine 314, and threonine 359. Lysine 362 is a catalytic residue. At lysine 362 the chain carries N6-(pyridoxal phosphate)lysine. 2 residues coordinate pyridoxal 5'-phosphate: threonine 391 and threonine 392. A substrate-binding site is contributed by threonine 477.

Belongs to the class-II pyridoxal-phosphate-dependent aminotransferase family. In terms of assembly, homodimer. Requires pyridoxal 5'-phosphate as cofactor.

Its subcellular location is the mitochondrion matrix. It carries out the reaction succinyl-CoA + glycine + H(+) = 5-aminolevulinate + CO2 + CoA. It functions in the pathway porphyrin-containing compound metabolism; protoporphyrin-IX biosynthesis; 5-aminolevulinate from glycine: step 1/1. Its function is as follows. Catalyzes the synthesis of 5-aminolevulinate (ALA) from succinyl-CoA and glycine, the first and rate-limiting step in heme biosynthesis. This Agaricus bisporus (White button mushroom) protein is 5-aminolevulinate synthase, mitochondrial (hem1).